A 330-amino-acid polypeptide reads, in one-letter code: Phenylalanine--tRNA ligase alpha subunit (330 aa).

Glutamate 254 lines the Mg(2+) pocket.

This sequence belongs to the class-II aminoacyl-tRNA synthetase family. Phe-tRNA synthetase alpha subunit type 1 subfamily. Tetramer of two alpha and two beta subunits. It depends on Mg(2+) as a cofactor.

It is found in the cytoplasm. The enzyme catalyses tRNA(Phe) + L-phenylalanine + ATP = L-phenylalanyl-tRNA(Phe) + AMP + diphosphate + H(+). The polypeptide is Phenylalanine--tRNA ligase alpha subunit (pheS) (Neisseria meningitidis serogroup A / serotype 4A (strain DSM 15465 / Z2491)).